A 205-amino-acid polypeptide reads, in one-letter code: Holliday junction branch migration complex subunit RuvA (205 aa).

Residues 1–64 form a domain I region; it reads MIGRLRGTLA…EDAHLLYGFA (64 aa). A domain II region spans residues 65-143; it reads EKRERELFRE…AWETSPAMFT (79 aa). The tract at residues 144–154 is flexible linker; that stretch reads LVSDGPLPVAS. Positions 154-205 are domain III; it reads SESSAEADAVSALVSLGYKPQEASKAIAAIKDKAGLSSEELIRRSLKGMIAK.

It belongs to the RuvA family. Homotetramer. Forms an RuvA(8)-RuvB(12)-Holliday junction (HJ) complex. HJ DNA is sandwiched between 2 RuvA tetramers; dsDNA enters through RuvA and exits via RuvB. An RuvB hexamer assembles on each DNA strand where it exits the tetramer. Each RuvB hexamer is contacted by two RuvA subunits (via domain III) on 2 adjacent RuvB subunits; this complex drives branch migration. In the full resolvosome a probable DNA-RuvA(4)-RuvB(12)-RuvC(2) complex forms which resolves the HJ.

It localises to the cytoplasm. The RuvA-RuvB-RuvC complex processes Holliday junction (HJ) DNA during genetic recombination and DNA repair, while the RuvA-RuvB complex plays an important role in the rescue of blocked DNA replication forks via replication fork reversal (RFR). RuvA specifically binds to HJ cruciform DNA, conferring on it an open structure. The RuvB hexamer acts as an ATP-dependent pump, pulling dsDNA into and through the RuvAB complex. HJ branch migration allows RuvC to scan DNA until it finds its consensus sequence, where it cleaves and resolves the cruciform DNA. The protein is Holliday junction branch migration complex subunit RuvA of Pseudomonas entomophila (strain L48).